The chain runs to 93 residues: Large ribosomal subunit protein bL27 (93 aa).

The disordered stretch occupies residues 1–22 (MAHKKAGGSSRNGRDSAGRRLG).

This sequence belongs to the bacterial ribosomal protein bL27 family.

The polypeptide is Large ribosomal subunit protein bL27 (Parvibaculum lavamentivorans (strain DS-1 / DSM 13023 / NCIMB 13966)).